The primary structure comprises 938 residues: Isoleucine--tRNA ligase (938 aa).

The 'HIGH' region motif lies at 58–68 (PYANGSIHIGH). Glutamate 561 contacts L-isoleucyl-5'-AMP. The short motif at 602 to 606 (KMSKS) is the 'KMSKS' region element. Residue lysine 605 participates in ATP binding. 4 residues coordinate Zn(2+): cysteine 901, cysteine 904, cysteine 921, and cysteine 924.

This sequence belongs to the class-I aminoacyl-tRNA synthetase family. IleS type 1 subfamily. Monomer. Zn(2+) is required as a cofactor.

It is found in the cytoplasm. It carries out the reaction tRNA(Ile) + L-isoleucine + ATP = L-isoleucyl-tRNA(Ile) + AMP + diphosphate. Catalyzes the attachment of isoleucine to tRNA(Ile). As IleRS can inadvertently accommodate and process structurally similar amino acids such as valine, to avoid such errors it has two additional distinct tRNA(Ile)-dependent editing activities. One activity is designated as 'pretransfer' editing and involves the hydrolysis of activated Val-AMP. The other activity is designated 'posttransfer' editing and involves deacylation of mischarged Val-tRNA(Ile). This chain is Isoleucine--tRNA ligase, found in Serratia proteamaculans (strain 568).